The sequence spans 284 residues: Tropomyosin (284 aa).

A disordered region spans residues 1–41; the sequence is MDAIKKKMQAMKLEKDNAVDRAETAEQQSRDAALRAEKAEE. Residues 1-284 adopt a coiled-coil conformation; the sequence is MDAIKKKMQA…DQTFSELTGY (284 aa). Residues 12–41 are compositionally biased toward basic and acidic residues; it reads KLEKDNAVDRAETAEQQSRDAALRAEKAEE.

This sequence belongs to the tropomyosin family. As to quaternary structure, homodimer.

Tropomyosin, in association with the troponin complex, plays a central role in the calcium dependent regulation of muscle contraction. This is Tropomyosin from Haemaphysalis longicornis (Bush tick).